Here is a 392-residue protein sequence, read N- to C-terminus: METSKEKTITSPGPYIVRLLNSSLNGCEFPLLTGRTLFVVGQSDALTASGQLPDIPADSFFIPLDHGGVNFEIQVDTDATEIILHELKEGNSESRSVQLNTPIQVGELLILIRPESEPWVPEQPEKLETSAKKNEPRFKNGIVAALAGFFILGIGTVGTLWILNSPQRQAAELDSLLGQEKERFQVLPGRDKMLYVAAQNERDTLWARQVLARGDYDKNARVINENEENKRISIWLDTYYPQLAYYRIHFDEPRKPVFWLSRQRNTMSKKELEVLSQKLRALMPYADSVNITLMDDVTAAGQAEAGLKQQALPYSRRNHKGGVTFVIQGALDDVEILRARQFVDSYYRTWGGRYVQFAIELKDDWLKGRSFQYGAEGYIKMSPGHWYFPSPL.

The helical transmembrane segment at 142–162 threads the bilayer; it reads IVAALAGFFILGIGTVGTLWI.

It is found in the cell membrane. Its function is as follows. Required for invasion of epithelial cells. This is Protein PrgH (prgH) from Salmonella typhimurium (strain LT2 / SGSC1412 / ATCC 700720).